The sequence spans 568 residues: Phosphomethylpyrimidine synthase (568 aa).

Substrate is bound by residues Asn188, Met217, Tyr246, His282, 302–304 (SRG), 343–346 (DGLR), and Glu382. His386 lines the Zn(2+) pocket. Tyr409 contacts substrate. His450 lines the Zn(2+) pocket. Residues Cys530, Cys533, and Cys538 each coordinate [4Fe-4S] cluster.

It belongs to the ThiC family. Homodimer. It depends on [4Fe-4S] cluster as a cofactor.

The catalysed reaction is 5-amino-1-(5-phospho-beta-D-ribosyl)imidazole + S-adenosyl-L-methionine = 4-amino-2-methyl-5-(phosphooxymethyl)pyrimidine + CO + 5'-deoxyadenosine + formate + L-methionine + 3 H(+). Its pathway is cofactor biosynthesis; thiamine diphosphate biosynthesis. Functionally, catalyzes the synthesis of the hydroxymethylpyrimidine phosphate (HMP-P) moiety of thiamine from aminoimidazole ribotide (AIR) in a radical S-adenosyl-L-methionine (SAM)-dependent reaction. The polypeptide is Phosphomethylpyrimidine synthase (Idiomarina loihiensis (strain ATCC BAA-735 / DSM 15497 / L2-TR)).